A 647-amino-acid chain; its full sequence is MYFHITYSDLDINETHDDDLKDFLIIPEEDIFGQFVTHILDPNENDLYEIEPDKICKNPFSSSIYTNNITIKNKYSLLDANIYEILLSKGISKYIDGLLVWAINFNLLWLLELIYNYKPPINLKDREIYLNSNCDDINLIKFIVTRNDYFQINLESLLEYVDNKEIIIYLMDFIDTDKIVKYVIGNCSSEFFIDCIKGNTILTQEHIKLAVQNRKIPVLEHLINLGIEYDLNEIINDIKDFDILKYMLEIGNSLNEDNVNIIIFNIHTTQLIEYLMNLGYTINSKLVISMFSHMLIVSENTDIVEFLKSINAKDSDLTVDFIEYLLEDNFEKAKQIMEYFPGANTVIDCNLFLKYAIISQDIPNIEYSINKGADLKKYYKNILLTNNVTILDLCLNHCEINDVNNFILKIIENDCIETLKYLVDNNYNIDLLDMFQIMVKKNYYNPIRKYICEQIKNNNLLIPNLVEIIMNLFFDDGDVNWILKYNFEYQYKDNLDEIIMTIIIGDCDGAKNMIMNYNYTSDLKVLYAFILKEFPEECSSEKMDTIKFLLDFNADNNEYVQSAFLLSVFYTPLLKYFVEDKQIDLTVNGQNIVEYLISDGDHEIFRYLYYNGFDVKNNGFEIINAHNSNNECAITKLIESIKNNTYQ.

9 ANK repeats span residues 123–154, 202–231, 233–256, 258–284, 289–319, 348–377, 401–431, 529–558, and 588–617; these read LKDR…QINL, LTQE…EYDL, EIIN…SLNE, NVNI…TINS, SMFS…DLTV, DCNL…DLKK, NDVN…NIDL, FILK…DNNE, and NGQN…DVKN.

This chain is Putative ankyrin repeat protein L764, found in Acanthamoeba polyphaga (Amoeba).